A 518-amino-acid chain; its full sequence is Calcium-dependent protein kinase 1 (518 aa).

Over residues 1 to 10 (MGNRTSRHHR) the composition is skewed to basic residues. Residues 1 to 49 (MGNRTSRHHRAAPEQPPPQPKPKPQPQQQQQQWPRPQQPTPPPAAAPDA) form a disordered region. Residue Gly-2 is the site of N-myristoyl glycine attachment. Residues 14-25 (EQPPPQPKPKPQ) are compositionally biased toward pro residues. Residues 26-35 (PQQQQQQWPR) show a composition bias toward low complexity. Over residues 36–45 (PQQPTPPPAA) the composition is skewed to pro residues. Residues 66-324 (YTFGRELGRG…SAEILNHPWI (259 aa)) enclose the Protein kinase domain. ATP is bound by residues 72 to 80 (LGRGQFGVT) and Lys-95. Asp-190 (proton acceptor) is an active-site residue. Residues 330–360 (APDKPLDITVISRMKQFRAMNKLKKVALKVV) form an autoinhibitory domain region. 4 EF-hand domains span residues 367 to 402 (EEITGLKEMFRSLDTDNSGTITLEELRSGLPKLGTK), 403 to 438 (ISESEIRQLMEAADVDGNGTIDYAEFISATMHMNRL), 439 to 474 (EKEDHILKAFEYFDKDHSGYITVDELEEALKKYDMG), and 475 to 509 (DDKTIKEIIAEVDTDHDGRINYQEFVAMMRNNNPE). Ca(2+) contacts are provided by Asp-380, Asp-382, Ser-384, Thr-386, Glu-391, Asp-416, Asp-418, Asn-420, Thr-422, Glu-427, Asp-452, Asp-454, Ser-456, Tyr-458, Glu-463, Asp-487, Asp-489, Asp-491, Arg-493, and Glu-498.

It belongs to the protein kinase superfamily. Ser/Thr protein kinase family. CDPK subfamily. Expressed in roots and leaf blades.

The protein localises to the membrane. The catalysed reaction is L-seryl-[protein] + ATP = O-phospho-L-seryl-[protein] + ADP + H(+). It catalyses the reaction L-threonyl-[protein] + ATP = O-phospho-L-threonyl-[protein] + ADP + H(+). Activated by calcium. Autophosphorylation may play an important role in the regulation of the kinase activity. In terms of biological role, may play a role in signal transduction pathways that involve calcium as a second messenger. The sequence is that of Calcium-dependent protein kinase 1 from Oryza sativa subsp. japonica (Rice).